The chain runs to 118 residues: Myotrophin (118 aa).

3 ANK repeats span residues 1 to 30 (MGDK…DVNR), 34 to 65 (GGRK…NAAD), and 67 to 98 (HGIT…TVKG).

It belongs to the myotrophin family.

It localises to the cytoplasm. The protein localises to the nucleus. The protein resides in the perinuclear region. Regulates NF-kappa-B transcription factor activity. Promotes growth of cardiomyocytes, but not cardiomyocyte proliferation. Promotes cardiac muscle hypertrophy. Plays a role in the regulation of the growth of actin filaments. Inhibits the activity of the F-actin-capping protein complex. This chain is Myotrophin (mtpn), found in Xenopus tropicalis (Western clawed frog).